Consider the following 166-residue polypeptide: Transcriptional repressor NrdR (166 aa).

A zinc finger spans residues cysteine 3–cysteine 34. Positions leucine 49–serine 139 constitute an ATP-cone domain.

It belongs to the NrdR family. Zn(2+) serves as cofactor.

Functionally, negatively regulates transcription of bacterial ribonucleotide reductase nrd genes and operons by binding to NrdR-boxes. The sequence is that of Transcriptional repressor NrdR from Pelotomaculum thermopropionicum (strain DSM 13744 / JCM 10971 / SI).